Consider the following 404-residue polypeptide: Pyrophosphate--fructose 6-phosphate 1-phosphotransferase (404 aa).

Residue G12 participates in diphosphate binding. D121 contributes to the Mg(2+) binding site. Residues 149–151 (TID), 194–196 (MGR), E266, and 323–326 (YFSR) each bind substrate. D151 (proton acceptor) is an active-site residue.

This sequence belongs to the phosphofructokinase type A (PFKA) family. PPi-dependent PFK group II subfamily. Clade 'P' sub-subfamily. In terms of assembly, homodimer. Mg(2+) is required as a cofactor.

The protein localises to the cytoplasm. The enzyme catalyses beta-D-fructose 6-phosphate + diphosphate = beta-D-fructose 1,6-bisphosphate + phosphate + H(+). The protein operates within carbohydrate degradation; glycolysis; D-glyceraldehyde 3-phosphate and glycerone phosphate from D-glucose: step 3/4. With respect to regulation, non-allosteric. Catalyzes the phosphorylation of D-fructose 6-phosphate, the first committing step of glycolysis. Uses inorganic phosphate (PPi) as phosphoryl donor instead of ATP like common ATP-dependent phosphofructokinases (ATP-PFKs), which renders the reaction reversible, and can thus function both in glycolysis and gluconeogenesis. Consistently, PPi-PFK can replace the enzymes of both the forward (ATP-PFK) and reverse (fructose-bisphosphatase (FBPase)) reactions. The protein is Pyrophosphate--fructose 6-phosphate 1-phosphotransferase of Propionibacterium freudenreichii subsp. shermanii (strain ATCC 9614 / DSM 4902 / CIP 103027 / NCIMB 8099 / CIRM-BIA1).